Reading from the N-terminus, the 60-residue chain is Three-finger toxin Mnn I (60 aa).

Cystine bridges form between cysteine 3–cysteine 22, cysteine 17–cysteine 39, cysteine 41–cysteine 52, and cysteine 53–cysteine 58.

It belongs to the three-finger toxin family. Short-chain subfamily. Type I alpha-neurotoxin sub-subfamily. As to expression, expressed by the venom gland.

It localises to the secreted. Binds to muscle nicotinic acetylcholine receptor (nAChR) and inhibit acetylcholine from binding to the receptor, thereby impairing neuromuscular transmission. This Micrurus nigrocinctus (Central American coral snake) protein is Three-finger toxin Mnn I.